The sequence spans 139 residues: Acidic phospholipase A2 4 (139 aa).

The N-terminal stretch at 1-16 (MRTLWIVAVWLVGVEG) is a signal peptide. Disulfide bonds link C42/C131, C44/C60, C59/C111, C65/C139, C66/C104, C73/C97, and C91/C102. 3 residues coordinate Ca(2+): Y43, G45, and G47. Residue H63 is part of the active site. Ca(2+) is bound at residue D64. D105 is a catalytic residue.

It belongs to the phospholipase A2 family. Group II subfamily. D49 sub-subfamily. It depends on Ca(2+) as a cofactor. In terms of tissue distribution, expressed by the venom gland.

The protein localises to the secreted. The catalysed reaction is a 1,2-diacyl-sn-glycero-3-phosphocholine + H2O = a 1-acyl-sn-glycero-3-phosphocholine + a fatty acid + H(+). Functionally, PLA2 catalyzes the calcium-dependent hydrolysis of the 2-acyl groups in 3-sn-phosphoglycerides. In Echis carinatus sochureki (Saw-scaled viper), this protein is Acidic phospholipase A2 4.